A 527-amino-acid polypeptide reads, in one-letter code: Protein PyrBI (527 aa).

The segment at 1–342 (MKRDFLGRTL…MFGGALEAPF (342 aa)) is aspartate carbamoyltransferase. The segment at 343–357 (DTSKKEEKPEEDFII) is linker. The interval 368–527 (VQKEGKRGIK…PHSFEEIWSI (160 aa)) is aspartate carbamoyltransferase regulatory region. 4 residues coordinate Zn(2+): Cys483, Cys488, Cys512, and Cys515.

It in the N-terminal section; belongs to the aspartate/ornithine carbamoyltransferase superfamily. ATCase family. In the C-terminal section; belongs to the PyrI family.

The enzyme catalyses carbamoyl phosphate + L-aspartate = N-carbamoyl-L-aspartate + phosphate + H(+). It functions in the pathway pyrimidine metabolism; UMP biosynthesis via de novo pathway; (S)-dihydroorotate from bicarbonate: step 2/3. This Thermotoga maritima (strain ATCC 43589 / DSM 3109 / JCM 10099 / NBRC 100826 / MSB8) protein is Protein PyrBI (pyrBI).